A 617-amino-acid chain; its full sequence is Autophagy-related protein 20 (617 aa).

The interval 1–83 (MWNDEDNNPY…KRKPGGYDSR (83 aa)) is disordered. Residues 20–31 (QSSSINPTSPST) show a composition bias toward low complexity. Residues 48–58 (DNEHNHGVIHD) are compositionally biased toward basic and acidic residues. The segment covering 59-68 (DSDDDDEDLT) has biased composition (acidic residues). The PX domain maps to 89–209 (YENPKLSILI…RFFDPNASWS (121 aa)). A 1,2-diacyl-sn-glycero-3-phospho-(1D-myo-inositol-3-phosphate) is bound by residues Arg126, Ser128, Lys152, and Arg175. A coiled-coil region spans residues 403–440 (QQDLTTEELSKKRALLDQLEQSEAEARRIENYLSSSQQ). The segment at 434-516 (YLSSSQQISP…SGNSITNKIF (83 aa)) is disordered. The span at 454–463 (PPSHQRRDGS) shows a compositional bias: basic and acidic residues. A compositionally biased stretch (polar residues) spans 480–500 (DFSSHTPSASQGLPERSTSVP).

Belongs to the sorting nexin family. As to quaternary structure, forms a complex with SNX4/ATG24 and ATG17.

It localises to the endosome membrane. The protein resides in the preautophagosomal structure membrane. Functionally, required for cytoplasm to vacuole transport (Cvt), pexophagy and mitophagy. Also involved in endoplasmic reticulum-specific autophagic process and is essential for the survival of cells subjected to severe ER stress. Functions in protein retrieval from the endocytic pathway. Required for proper sorting of the v-SNARE protein SNC1. Autophagy is required for proper vegetative growth, asexual/sexual reproduction, and full virulence. Autophagy is particularly involved in the biosynthesis of deoxynivalenol (DON), an important virulence determinant. This Gibberella zeae (strain ATCC MYA-4620 / CBS 123657 / FGSC 9075 / NRRL 31084 / PH-1) (Wheat head blight fungus) protein is Autophagy-related protein 20.